The following is a 210-amino-acid chain: ATP-dependent Clp protease proteolytic subunit (210 aa).

Ser-107 acts as the Nucleophile in catalysis. His-132 is a catalytic residue.

It belongs to the peptidase S14 family. As to quaternary structure, fourteen ClpP subunits assemble into 2 heptameric rings which stack back to back to give a disk-like structure with a central cavity, resembling the structure of eukaryotic proteasomes.

The protein localises to the cytoplasm. The enzyme catalyses Hydrolysis of proteins to small peptides in the presence of ATP and magnesium. alpha-casein is the usual test substrate. In the absence of ATP, only oligopeptides shorter than five residues are hydrolyzed (such as succinyl-Leu-Tyr-|-NHMec, and Leu-Tyr-Leu-|-Tyr-Trp, in which cleavage of the -Tyr-|-Leu- and -Tyr-|-Trp bonds also occurs).. Cleaves peptides in various proteins in a process that requires ATP hydrolysis. Has a chymotrypsin-like activity. Plays a major role in the degradation of misfolded proteins. In Azorhizobium caulinodans (strain ATCC 43989 / DSM 5975 / JCM 20966 / LMG 6465 / NBRC 14845 / NCIMB 13405 / ORS 571), this protein is ATP-dependent Clp protease proteolytic subunit.